A 451-amino-acid polypeptide reads, in one-letter code: Eukaryotic translation initiation factor 5 (451 aa).

Residue 29 to 36 (GRGNGIKT) participates in GTP binding. 2 disordered regions span residues 143–233 (LKNP…DDDV) and 263–299 (STEE…TKPS). Residues 147 to 178 (PEQKKGGKDKKAMRRAEKERLKEGEAADEEQK) show a composition bias toward basic and acidic residues. Over residues 179-188 (KLKKDAKKKG) the composition is skewed to basic residues. Composition is skewed to basic and acidic residues over residues 208–226 (DEDH…KAAA) and 266–279 (ETEK…HKDG). The W2 domain occupies 290 to 449 (NDKPAVTKPS…QSAESDEEGD (160 aa)).

It belongs to the eIF-2-beta/eIF-5 family.

Its function is as follows. Catalyzes the hydrolysis of GTP bound to the 40S ribosomal initiation complex (40S.mRNA.Met-tRNA[F].eIF-2.GTP) with the subsequent joining of a 60S ribosomal subunit resulting in the release of eIF-2 and the guanine nucleotide. The subsequent joining of a 60S ribosomal subunit results in the formation of a functional 80S initiation complex (80S.mRNA.Met-tRNA[F]). The protein is Eukaryotic translation initiation factor 5 (EIF5) of Zea mays (Maize).